The chain runs to 351 residues: Methylthioribose-1-phosphate isomerase (351 aa).

Substrate-binding positions include 53 to 55 (RGA), arginine 96, and glutamine 205. Aspartate 246 serves as the catalytic Proton donor. 256–257 (NK) provides a ligand contact to substrate.

The protein belongs to the eIF-2B alpha/beta/delta subunits family. MtnA subfamily.

The catalysed reaction is 5-(methylsulfanyl)-alpha-D-ribose 1-phosphate = 5-(methylsulfanyl)-D-ribulose 1-phosphate. Its pathway is amino-acid biosynthesis; L-methionine biosynthesis via salvage pathway; L-methionine from S-methyl-5-thio-alpha-D-ribose 1-phosphate: step 1/6. Functionally, catalyzes the interconversion of methylthioribose-1-phosphate (MTR-1-P) into methylthioribulose-1-phosphate (MTRu-1-P). This chain is Methylthioribose-1-phosphate isomerase, found in Synechocystis sp. (strain ATCC 27184 / PCC 6803 / Kazusa).